The primary structure comprises 71 residues: Large ribosomal subunit protein bL31 (71 aa).

The Zn(2+) site is built by cysteine 16, cysteine 18, cysteine 37, and cysteine 40.

Belongs to the bacterial ribosomal protein bL31 family. Type A subfamily. Part of the 50S ribosomal subunit. The cofactor is Zn(2+).

Binds the 23S rRNA. This is Large ribosomal subunit protein bL31 from Nitratidesulfovibrio vulgaris (strain ATCC 29579 / DSM 644 / CCUG 34227 / NCIMB 8303 / VKM B-1760 / Hildenborough) (Desulfovibrio vulgaris).